The chain runs to 859 residues: Bifunctional levopimaradiene synthase, chloroplastic (859 aa).

The transit peptide at 1 to 70 directs the protein to the chloroplast; sequence MALLSSSLSS…IACVGEDSLS (70 aa). Lysine 259 lines the substrate pocket. Residues aspartate 392 and aspartate 394 each coordinate Mg(2+). A DXDD motif motif is present at residues 392 to 395; it reads DIDD. Substrate is bound at residue lysine 479. Residues aspartate 611, aspartate 615, asparagine 755, threonine 759, and glutamate 763 each contribute to the Mg(2+) site. The DDXXD motif signature appears at 611 to 615; that stretch reads DDLYD.

This sequence belongs to the terpene synthase family. Tpsd subfamily. Requires Mg(2+) as cofactor.

It localises to the plastid. The protein localises to the chloroplast. It carries out the reaction (2E,6E,10E)-geranylgeranyl diphosphate = (+)-copalyl diphosphate. The enzyme catalyses (+)-copalyl diphosphate = abieta-8(14),12-diene + diphosphate. It participates in terpene metabolism; oleoresin biosynthesis. In terms of biological role, involved in defensive oleoresin formation in conifers in response to insect attack or other injury. Involved in diterpene (C20) olefins biosynthesis. Bifunctional enzyme that catalyzes two sequential cyclizations of geranylgeranyl diphosphate (GGPP) to levopimaradiene. Levopimaradiene is the major products of the enzyme followed by abietadiene, neoabietadiene and palustradiene. This chain is Bifunctional levopimaradiene synthase, chloroplastic (TPS-LAS), found in Picea abies (Norway spruce).